Consider the following 70-residue polypeptide: MKNDKLFLTGKILEIIHGDKYRVMLENNVEVDAHLAGKMKMKRTKILPGDVVEVEFSPYDLKLGRITQRK.

One can recognise an S1-like domain in the interval Met1–Lys70.

This sequence belongs to the IF-1 family. Component of the 30S ribosomal translation pre-initiation complex which assembles on the 30S ribosome in the order IF-2 and IF-3, IF-1 and N-formylmethionyl-tRNA(fMet); mRNA recruitment can occur at any time during PIC assembly.

Its subcellular location is the cytoplasm. Functionally, one of the essential components for the initiation of protein synthesis. Stabilizes the binding of IF-2 and IF-3 on the 30S subunit to which N-formylmethionyl-tRNA(fMet) subsequently binds. Helps modulate mRNA selection, yielding the 30S pre-initiation complex (PIC). Upon addition of the 50S ribosomal subunit IF-1, IF-2 and IF-3 are released leaving the mature 70S translation initiation complex. This chain is Translation initiation factor IF-1, found in Mycoplasma genitalium (strain ATCC 33530 / DSM 19775 / NCTC 10195 / G37) (Mycoplasmoides genitalium).